The sequence spans 495 residues: uncharacterized protein (495 aa).

The TRAM domain occupies 16-74 (SSKRGDLIELAVTALDEDGNGIGTHDGTNVHVIGALPDERVRARLTHVGKRHLHAEAVE). [4Fe-4S] cluster contacts are provided by Cys-88, Cys-94, Cys-97, and Cys-175. 4 residues coordinate S-adenosyl-L-methionine: Gln-299, Tyr-328, Glu-349, and Asn-397. Catalysis depends on Cys-424, which acts as the Nucleophile. Residues 472–483 (DRLESPAKERSR) are compositionally biased toward basic and acidic residues. The disordered stretch occupies residues 472–495 (DRLESPAKERSRPRASHKAKGGAV). Residues 484 to 495 (PRASHKAKGGAV) show a composition bias toward basic residues.

The protein belongs to the class I-like SAM-binding methyltransferase superfamily. RNA M5U methyltransferase family.

This is an uncharacterized protein from Geobacter sulfurreducens (strain ATCC 51573 / DSM 12127 / PCA).